The chain runs to 399 residues: Lipase member K (399 aa).

Residues 1-19 (MWQLLAAACWMLLLGSMYG) form the signal peptide. The region spanning 78-378 (PAVYLQHGLI…HYNHVDFYLG (301 aa)) is the AB hydrolase-1 domain. Residue Ser172 is the Nucleophile of the active site. Cys246 and Cys255 are joined by a disulfide. Asn271 and Asn327 each carry an N-linked (GlcNAc...) asparagine glycan. Catalysis depends on charge relay system residues Asp343 and His372.

Belongs to the AB hydrolase superfamily. Lipase family. Exclusively expressed in the epidermis within the granular keratinocytes.

Its subcellular location is the secreted. Its function is as follows. Plays a highly specific role in the last step of keratinocyte differentiation. May have an essential function in lipid metabolism of the most differentiated epidermal layers. This Homo sapiens (Human) protein is Lipase member K (LIPK).